Consider the following 473-residue polypeptide: Argininosuccinate lyase (473 aa).

Belongs to the lyase 1 family. Argininosuccinate lyase subfamily.

It is found in the cytoplasm. It carries out the reaction 2-(N(omega)-L-arginino)succinate = fumarate + L-arginine. It participates in amino-acid biosynthesis; L-arginine biosynthesis; L-arginine from L-ornithine and carbamoyl phosphate: step 3/3. This is Argininosuccinate lyase from Streptomyces clavuligerus.